Reading from the N-terminus, the 313-residue chain is MLDKIIRIATRQSPLALWQAHYVQHLLQANHPGLQIELVPMVTRGDIILDTPLAKVGGKGLFVKELELALLDGRADIAVHSMKDVPIAFPEGLGLVAICEREDPRDAFVSSHYAHLDDLPAGSVVGTSSLRRQCQLRERRPDLIIRDLRGNVGTRLAKLDNGDYQAIILAVAGLKRLGLETRIRYAMSAEESLPAVGQGAVGIECRLDDDHTRQLLAPLNHRHTELRVCAERAMNIRLEGGCQVPIGSYAELEGDTLWLRALVGAPDGSQMIRGERRGPAAEAEQMGIELADELLSRGAREILAAVYLDNPAR.

At Cys242 the chain carries S-(dipyrrolylmethanemethyl)cysteine.

The protein belongs to the HMBS family. Monomer. Dipyrromethane serves as cofactor.

It carries out the reaction 4 porphobilinogen + H2O = hydroxymethylbilane + 4 NH4(+). It participates in porphyrin-containing compound metabolism; protoporphyrin-IX biosynthesis; coproporphyrinogen-III from 5-aminolevulinate: step 2/4. Its function is as follows. Tetrapolymerization of the monopyrrole PBG into the hydroxymethylbilane pre-uroporphyrinogen in several discrete steps. The sequence is that of Porphobilinogen deaminase from Yersinia pseudotuberculosis serotype IB (strain PB1/+).